The chain runs to 475 residues: 1-aminocyclopropane-1-carboxylate synthase CMA101 (475 aa).

K272 is subject to N6-(pyridoxal phosphate)lysine.

This sequence belongs to the class-I pyridoxal-phosphate-dependent aminotransferase family. As to quaternary structure, homodimer. The cofactor is pyridoxal 5'-phosphate.

The catalysed reaction is S-adenosyl-L-methionine = 1-aminocyclopropane-1-carboxylate + S-methyl-5'-thioadenosine + H(+). It functions in the pathway alkene biosynthesis; ethylene biosynthesis via S-adenosyl-L-methionine; ethylene from S-adenosyl-L-methionine: step 1/2. Catalyzes the formation of 1-aminocyclopropane-1-carboxylate, a direct precursor of ethylene in higher plants. The protein is 1-aminocyclopropane-1-carboxylate synthase CMA101 (ACS2) of Cucurbita maxima (Pumpkin).